Here is a 360-residue protein sequence, read N- to C-terminus: 3-dehydroquinate synthase (360 aa).

Residues 69-74 (DGEAYK), 103-107 (GVIGD), 127-128 (TT), Lys140, Lys149, and 167-170 (CLQT) contribute to the NAD(+) site. Zn(2+) contacts are provided by Glu182, His245, and His262.

Belongs to the sugar phosphate cyclases superfamily. Dehydroquinate synthase family. It depends on Co(2+) as a cofactor. Zn(2+) is required as a cofactor. Requires NAD(+) as cofactor.

It is found in the cytoplasm. The catalysed reaction is 7-phospho-2-dehydro-3-deoxy-D-arabino-heptonate = 3-dehydroquinate + phosphate. Its pathway is metabolic intermediate biosynthesis; chorismate biosynthesis; chorismate from D-erythrose 4-phosphate and phosphoenolpyruvate: step 2/7. In terms of biological role, catalyzes the conversion of 3-deoxy-D-arabino-heptulosonate 7-phosphate (DAHP) to dehydroquinate (DHQ). This is 3-dehydroquinate synthase from Aeromonas hydrophila subsp. hydrophila (strain ATCC 7966 / DSM 30187 / BCRC 13018 / CCUG 14551 / JCM 1027 / KCTC 2358 / NCIMB 9240 / NCTC 8049).